An 855-amino-acid chain; its full sequence is Pre-mRNA-splicing factor SYF1 (855 aa).

9 HAT repeats span residues 15–47, 48–80, 90–122, 124–158, 160–192, 198–230, 235–268, 270–305, and 369–407; these read LVFEEEDLPYEEEIMRNQFSVKCWLRYIEFKQG, APKPRLNQLYERALKLLPCSYKLWYRYLKARRA, PAYEDVNNCHERAFVFMHKMPRLWLDYCQFLMD, GRVTHTRRTFDRALRALPITQHSRIWPLYLRFLRS, PLPETAVRGYRRFLKLSPESAEEYIEYLKSSDR, QRLATVVNDERFVSKAGKSNYQLWHELCDLISQ, VQSLNVDAIIRGGLTRFTDQLGKLWCSLADYYIR, GHFEKARDVYEEAIRTVMTVRDFTQVFDSYAQFEES, and GRPREIINTYTEAVQTVDPFKATGKPHTLWVAFAKFYED. Lys-420 carries the post-translational modification N6-acetyllysine. 5 HAT repeats span residues 498-530, 532-566, 571-605, 643-677, and 679-713; these read GTFQSTKAVYDRILDLRIATPQIVINYAMFLEE, KYFEESFKAYERGISLFKWPNVSDIWSTYLTKFIS, RKLERARDLFEQALDGCPPKYAKTLYLLYAQLEEE, YGVTHTRGIYQKAIEVLSDEHAREMCLRFADMECK, and GEIDRARAIYSFCSQICDPRTTGAFWQTWKDFEVR. The tract at residues 808 to 855 is disordered; sequence AELAQQANPEEIQLGEDEDEDEMDLEPNEVRLEQQSVPAAVFGSLKED. Over residues 820–834 the composition is skewed to acidic residues; that stretch reads QLGEDEDEDEMDLEP. Ser-851 carries the post-translational modification Phosphoserine.

Belongs to the crooked-neck family. In terms of assembly, associates with RNA polymerase II, the TCR-specific proteins CKN1/CSA and ERCC6/CSB, and XPA. Identified in the spliceosome C complex. Component of the XAB2 complex, a multimeric protein complex composed of XAB2, PRPF19, AQR, ZNF830, ISY1, and PPIE. Identified in a pentameric intron-binding (IB) complex composed of AQR, XAB2, ISY1, ZNF830 and PPIE that is incorporated into the spliceosome as a preassembled complex. The IB complex does not contain PRPF19.

The protein localises to the nucleus. In terms of biological role, involved in pre-mRNA splicing as component of the spliceosome. Involved in transcription-coupled repair (TCR), transcription and pre-mRNA splicing. This Rattus norvegicus (Rat) protein is Pre-mRNA-splicing factor SYF1 (Xab2).